Here is a 207-residue protein sequence, read N- to C-terminus: Outer-membrane lipoprotein LolB (207 aa).

An N-terminal signal peptide occupies residues 1–21; sequence MPLPDFRLIRLLPLAALVLTA. C22 carries N-palmitoyl cysteine lipidation. The S-diacylglycerol cysteine moiety is linked to residue C22.

This sequence belongs to the LolB family. As to quaternary structure, monomer.

The protein resides in the cell outer membrane. Its function is as follows. Plays a critical role in the incorporation of lipoproteins in the outer membrane after they are released by the LolA protein. This is Outer-membrane lipoprotein LolB from Escherichia coli (strain K12 / MC4100 / BW2952).